The primary structure comprises 179 residues: Large ribosomal subunit protein uL5c (179 aa).

The protein belongs to the universal ribosomal protein uL5 family. As to quaternary structure, part of the 50S ribosomal subunit; contacts the 5S rRNA.

The protein localises to the plastid. Binds 5S rRNA, forms part of the central protuberance of the 50S subunit. This chain is Large ribosomal subunit protein uL5c (rpl5), found in Euglena longa (Euglenophycean alga).